The following is a 364-amino-acid chain: Succinate--CoA ligase [ADP-forming] subunit beta (364 aa).

An ATP-grasp domain is found at 9–229; sequence KNIFKKYGIP…EFEEYKNKEK (221 aa). Residues K43, 50 to 52, E89, L92, and E97 each bind ATP; that span reads GRG. 2 residues coordinate Mg(2+): N189 and D203. Substrate contacts are provided by residues N246 and 303–305; that span reads GIT.

The protein belongs to the succinate/malate CoA ligase beta subunit family. In terms of assembly, heterotetramer of two alpha and two beta subunits. Mg(2+) is required as a cofactor.

It carries out the reaction succinate + ATP + CoA = succinyl-CoA + ADP + phosphate. The catalysed reaction is GTP + succinate + CoA = succinyl-CoA + GDP + phosphate. Its pathway is carbohydrate metabolism; tricarboxylic acid cycle; succinate from succinyl-CoA (ligase route): step 1/1. Its function is as follows. Succinyl-CoA synthetase functions in the citric acid cycle (TCA), coupling the hydrolysis of succinyl-CoA to the synthesis of either ATP or GTP and thus represents the only step of substrate-level phosphorylation in the TCA. The beta subunit provides nucleotide specificity of the enzyme and binds the substrate succinate, while the binding sites for coenzyme A and phosphate are found in the alpha subunit. This Methanocaldococcus jannaschii (strain ATCC 43067 / DSM 2661 / JAL-1 / JCM 10045 / NBRC 100440) (Methanococcus jannaschii) protein is Succinate--CoA ligase [ADP-forming] subunit beta.